The following is a 301-amino-acid chain: Putative S-adenosyl-L-methionine-dependent methyltransferase Mflv_5024 (301 aa).

S-adenosyl-L-methionine-binding positions include Asp-129 and 158 to 159; that span reads DL.

Belongs to the UPF0677 family.

Exhibits S-adenosyl-L-methionine-dependent methyltransferase activity. The protein is Putative S-adenosyl-L-methionine-dependent methyltransferase Mflv_5024 of Mycolicibacterium gilvum (strain PYR-GCK) (Mycobacterium gilvum (strain PYR-GCK)).